Reading from the N-terminus, the 370-residue chain is 3-isopropylmalate dehydrogenase (370 aa).

Residue 77-90 coordinates NAD(+); it reads GPKWDSVPYEVRPE. The substrate site is built by Arg-97, Arg-107, Arg-135, and Asp-226. Asp-226, Asp-250, and Asp-254 together coordinate Mg(2+). Residue 290 to 302 participates in NAD(+) binding; that stretch reads GSAPDIAGKGIAN.

It belongs to the isocitrate and isopropylmalate dehydrogenases family. LeuB type 1 subfamily. In terms of assembly, homodimer. Mg(2+) serves as cofactor. Requires Mn(2+) as cofactor.

The protein localises to the cytoplasm. The enzyme catalyses (2R,3S)-3-isopropylmalate + NAD(+) = 4-methyl-2-oxopentanoate + CO2 + NADH. It participates in amino-acid biosynthesis; L-leucine biosynthesis; L-leucine from 3-methyl-2-oxobutanoate: step 3/4. Catalyzes the oxidation of 3-carboxy-2-hydroxy-4-methylpentanoate (3-isopropylmalate) to 3-carboxy-4-methyl-2-oxopentanoate. The product decarboxylates to 4-methyl-2 oxopentanoate. This is 3-isopropylmalate dehydrogenase from Rhizobium johnstonii (strain DSM 114642 / LMG 32736 / 3841) (Rhizobium leguminosarum bv. viciae).